Here is a 390-residue protein sequence, read N- to C-terminus: Endothelial cell-selective adhesion molecule (390 aa).

The first 29 residues, Met1–Ala29, serve as a signal peptide directing secretion. In terms of domain architecture, Ig-like V-type spans Glu30–Lys143. Topologically, residues Glu30 to Ala248 are extracellular. N-linked (GlcNAc...) asparagine glycans are attached at residues Asn108, Asn169, Asn213, and Asn236. Residues Pro156–Ser242 enclose the Ig-like C2-type domain. Residues Cys174 and Cys224 are joined by a disulfide bond. The chain crosses the membrane as a helical span at residues Val249–Leu269. The Cytoplasmic portion of the chain corresponds to Leu270 to Val390. Residue Ser301 is modified to Phosphoserine. The segment at Ala316 to Val365 is disordered. A phosphothreonine mark is found at Thr332 and Thr334. Residues Pro333 to Leu342 show a composition bias toward polar residues. Phosphoserine occurs at positions 336, 339, 344, and 371.

Interacts with MAGI1.

The protein localises to the cell junction. Its subcellular location is the adherens junction. It is found in the tight junction. The protein resides in the cell membrane. Can mediate aggregation most likely through a homophilic molecular interaction. This chain is Endothelial cell-selective adhesion molecule (ESAM), found in Macaca fascicularis (Crab-eating macaque).